Reading from the N-terminus, the 169-residue chain is Interleukin-36 gamma (169 aa).

Residues 1-17 (MRGTPGDADGGGRAVYQ) constitute a propeptide that is removed on maturation.

The protein belongs to the IL-1 family. As to quaternary structure, interacts with cargo receptor TMED10; the interaction mediates the translocation from the cytoplasm into the ERGIC (endoplasmic reticulum-Golgi intermediate compartment) and thereby secretion. N-terminal truncation leads to a dramatic enhancement of its activity (&gt;1000-fold). Proteolytically cleaved by cathepsin CTSG. As to expression, highly expressed in tissues containing epithelial cells: skin, lung, stomach and esophagus. Expressed in bronchial epithelial. In skin is expressed only in keratinocytes but not in fibroblasts, endothelial cells or melanocytes. Up-regulated in lesional psoriasis skin. Expressed in monocyte-derived dendritic cells and M1 macrophages.

Its subcellular location is the cytoplasm. It is found in the secreted. Functionally, cytokine that binds to and signals through the IL1RL2/IL-36R receptor which in turn activates NF-kappa-B and MAPK signaling pathways in target cells. Part of the IL-36 signaling system that is thought to be present in epithelial barriers and to take part in local inflammatory response; similar to the IL-1 system with which it shares the coreceptor IL1RAP. Seems to be involved in skin inflammatory response by acting on keratinocytes, dendritic cells and indirectly on T-cells to drive tissue infiltration, cell maturation and cell proliferation. In cultured keratinocytes induces the expression of macrophage, T-cell, and neutrophil chemokines, such as CCL3, CCL4, CCL5, CCL2, CCL17, CCL22, CL20, CCL5, CCL2, CCL17, CCL22, CXCL8, CCL20 and CXCL1; also stimulates its own expression and that of the prototypic cutaneous pro-inflammatory parameters TNF-alpha, S100A7/psoriasin and inducible NOS. May play a role in pro-inflammatory responses during particular neutrophilic airway inflammation: activates mitogen-activated protein kinases and NF-kappa B in primary lung fibroblasts, and stimulates the expression of IL-8 and CXCL3 and Th17 chemokine CCL20 in lung fibroblasts. May be involved in the innate immune response to fungal pathogens, such as Aspergillus fumigatus. The protein is Interleukin-36 gamma of Homo sapiens (Human).